We begin with the raw amino-acid sequence, 658 residues long: DNA mismatch repair protein MutL (658 aa).

Basic and acidic residues predominate over residues 114 to 130; it reads RQEDSSHATQVKAEDGK. 2 disordered regions span residues 114-137 and 369-391; these read RQED…PTAA and DYPT…TAPM.

The protein belongs to the DNA mismatch repair MutL/HexB family.

Its function is as follows. This protein is involved in the repair of mismatches in DNA. It is required for dam-dependent methyl-directed DNA mismatch repair. May act as a 'molecular matchmaker', a protein that promotes the formation of a stable complex between two or more DNA-binding proteins in an ATP-dependent manner without itself being part of a final effector complex. The protein is DNA mismatch repair protein MutL of Neisseria meningitidis serogroup C (strain 053442).